The sequence spans 51 residues: MKLTCVVIIAVLILTACQFTTADDCKPKNNLCLWSSECCSGICFPFAQRCT.

An N-terminal signal peptide occupies residues 1 to 22; it reads MKLTCVVIIAVLILTACQFTTA. Intrachain disulfides connect Cys25/Cys39, Cys32/Cys43, and Cys38/Cys50.

The protein belongs to the conotoxin O1 superfamily. Expressed by the venom duct.

The protein resides in the secreted. In terms of biological role, probable neurotoxin. The sequence is that of Conotoxin Cal6.33 from Californiconus californicus (California cone).